Reading from the N-terminus, the 4490-residue chain is Dynein axonemal heavy chain 8 (4490 aa).

Position 674 is a phosphoserine (serine 674). AAA stretches follow at residues 1808-2030 (YQNE…VLRT), 2090-2309 (NAVA…KLNL), 2416-2669 (YYPT…IWQG), and 2780-3034 (QFNE…YRRR). Residues 1846-1853 (GPAGTGKT) and 2128-2135 (GPSGSGKT) each bind ATP. The stalk stretch occupies residues 3049-3346 (YKNIYAEKVK…MDLLNDADTC (298 aa)). Coiled coils occupy residues 3072–3164 (DKLM…ALNT), 3290–3354 (LKAN…QAAS), and 3594–3630 (RRVI…DNLL). AAA regions lie at residues 3432 to 3662 (LVDP…EVSE) and 3877 to 4091 (ARKY…FIQN).

It belongs to the dynein heavy chain family. In terms of assembly, consists of at least two heavy chains and a number of intermediate and light chains. As to expression, expressed in spermatozoa (at protein level). Not detected in airway epithelial cells (at protein level).

It is found in the cytoplasm. The protein localises to the cytoskeleton. The protein resides in the flagellum axoneme. In terms of biological role, force generating protein component of the outer dynein arms (ODAs) in the sperm flagellum. Produces force towards the minus ends of microtubules. Dynein has ATPase activity; the force-producing power stroke is thought to occur on release of ADP. Involved in sperm motility; implicated in sperm flagellar assembly. This Homo sapiens (Human) protein is Dynein axonemal heavy chain 8.